A 60-amino-acid polypeptide reads, in one-letter code: Large ribosomal subunit protein uL30 (60 aa).

This sequence belongs to the universal ribosomal protein uL30 family. Part of the 50S ribosomal subunit.

The chain is Large ribosomal subunit protein uL30 from Shewanella sp. (strain MR-7).